A 525-amino-acid chain; its full sequence is AP-4 complex accessory subunit Tepsin (525 aa).

Residues 8 to 141 enclose the ENTH domain; that stretch reads RDRLSFLHRL…FSDTVLPLAP (134 aa). Residues 139–229 form a disordered region; it reads LAPSQPLGTP…SHSGASREPG (91 aa). Over residues 193–225 the composition is skewed to low complexity; sequence SGPSSQNSSQNSDLSRVSDSGSHSGSDSHSGAS. Phosphoserine is present on residues Ser333 and Ser356. The segment at 355–465 is disordered; it reads LSPARGTSAE…PKRGPSSCAW (111 aa). Positions 393-412 are enriched in low complexity; that stretch reads PLSSTPVSSRSPAPSSGMPS. Pro residues predominate over residues 413-429; that stretch reads SPVPTPPPDASPIPAPG. Basic and acidic residues predominate over residues 434-448; that stretch reads AEARLAESRRWRPER. The interval 467–477 is interaction with AP4B1; the sequence is RDSLFAGMELV. Residues 487–525 form a disordered region; sequence AAAGESCPDAPRAPQTSSQRTAAKEPPGSEPSAFAFLNA. The tract at residues 515–525 is interaction with AP4E1; sequence SEPSAFAFLNA.

Interacts with AP4B1 and AP4E1; the interaction is direct and mediates the association of TEPSIN with the adapter-like complex 4 (AP-4), a heterotetramer composed of AP4B1, AP4E1, AP4M1 and AP4S1.

It localises to the golgi apparatus. The protein resides in the trans-Golgi network membrane. Its subcellular location is the cytoplasmic vesicle. The protein localises to the cytoplasm. It is found in the cytosol. Functionally, associates with the adapter-like complex 4 (AP-4) and may therefore play a role in vesicular trafficking of proteins at the trans-Golgi network. The protein is AP-4 complex accessory subunit Tepsin of Homo sapiens (Human).